A 278-amino-acid polypeptide reads, in one-letter code: Gap junction delta-3 protein (278 aa).

Residues 1–24 (MGEWAFLGSLLDAVQLQSPLVGRL) lie on the Cytoplasmic side of the membrane. The helical transmembrane segment at 25–45 (WLVIMLIFRILVLATVGGAVF) threads the bilayer. At 46-76 (EDEQEEFVCNTLQPGCRQTCYDRAFPVSHYR) the chain is on the extracellular side. The helical transmembrane segment at 77–97 (FWLFHILLLSAPPVLFVIYSM) threads the bilayer. Residues 98–136 (HQASKEAGGAQLAPPCARGRAEAPCSPCALRARRARRCY) are Cytoplasmic-facing. A helical membrane pass occupies residues 137–157 (LLSVALRLLAELAFLGGQALL). Over 158-188 (YGFRVDPHYACAGPPCPHTVDCFVSRPTEKT) the chain is Extracellular. The chain crosses the membrane as a helical span at residues 189–209 (VFVVFYFAVGLLSALLSVAEL). The Cytoplasmic segment spans residues 210–278 (GHLLWKGRQR…LATVRQDLAI (69 aa)). Positions 223-278 (LPPPPPSPSLPSQRGDPDPFGPPAYAHRSPAGDSEGEGGSGHSKASLATVRQDLAI) are disordered.

The protein belongs to the connexin family. Delta-type subfamily. As to quaternary structure, a connexon is composed of a hexamer of connexins.

It localises to the cell membrane. The protein resides in the cell junction. The protein localises to the gap junction. Its function is as follows. One gap junction consists of a cluster of closely packed pairs of transmembrane channels, the connexons, through which materials of low MW diffuse from one cell to a neighboring cell. This is Gap junction delta-3 protein (Gjd3) from Mus musculus (Mouse).